Reading from the N-terminus, the 556-residue chain is 2-succinyl-5-enolpyruvyl-6-hydroxy-3-cyclohexene-1-carboxylate synthase (556 aa).

It belongs to the TPP enzyme family. MenD subfamily. In terms of assembly, homodimer. Mg(2+) serves as cofactor. Requires Mn(2+) as cofactor. It depends on thiamine diphosphate as a cofactor.

It carries out the reaction isochorismate + 2-oxoglutarate + H(+) = 5-enolpyruvoyl-6-hydroxy-2-succinyl-cyclohex-3-ene-1-carboxylate + CO2. It functions in the pathway quinol/quinone metabolism; 1,4-dihydroxy-2-naphthoate biosynthesis; 1,4-dihydroxy-2-naphthoate from chorismate: step 2/7. It participates in quinol/quinone metabolism; menaquinone biosynthesis. Its function is as follows. Catalyzes the thiamine diphosphate-dependent decarboxylation of 2-oxoglutarate and the subsequent addition of the resulting succinic semialdehyde-thiamine pyrophosphate anion to isochorismate to yield 2-succinyl-5-enolpyruvyl-6-hydroxy-3-cyclohexene-1-carboxylate (SEPHCHC). This Salmonella paratyphi C (strain RKS4594) protein is 2-succinyl-5-enolpyruvyl-6-hydroxy-3-cyclohexene-1-carboxylate synthase.